Reading from the N-terminus, the 44-residue chain is Photosystem I reaction center subunit IX (44 aa).

The helical transmembrane segment at tyrosine 7–isoleucine 27 threads the bilayer.

Belongs to the PsaJ family.

It localises to the plastid. The protein localises to the chloroplast thylakoid membrane. Its function is as follows. May help in the organization of the PsaE and PsaF subunits. The protein is Photosystem I reaction center subunit IX of Populus alba (White poplar).